We begin with the raw amino-acid sequence, 583 residues long: Phosphoglucomutase, cytoplasmic 2 (583 aa).

Positions 25 and 124 each coordinate alpha-D-glucose 1,6-bisphosphate. Serine 124 (phosphoserine intermediate) is an active-site residue. The Mg(2+) site is built by serine 124, aspartate 300, aspartate 302, and aspartate 304. Serine 124 carries the post-translational modification Phosphoserine. Residues aspartate 304, arginine 305, threonine 368, glutamate 387, serine 389, and lysine 400 each coordinate alpha-D-glucose 1,6-bisphosphate.

This sequence belongs to the phosphohexose mutase family. In terms of assembly, monomer. Mg(2+) is required as a cofactor.

The protein resides in the cytoplasm. It catalyses the reaction alpha-D-glucose 1-phosphate = alpha-D-glucose 6-phosphate. It carries out the reaction O-phospho-L-seryl-[protein] + alpha-D-glucose 1-phosphate = alpha-D-glucose 1,6-bisphosphate + L-seryl-[protein]. The enzyme catalyses alpha-D-glucose 1,6-bisphosphate + L-seryl-[protein] = O-phospho-L-seryl-[protein] + alpha-D-glucose 6-phosphate. In terms of biological role, catalyzes the reversible isomerization of alpha-D-glucose 1-phosphate to alpha-D-glucose 6-phosphate. The mechanism proceeds via the intermediate compound alpha-D-glucose 1,6-bisphosphate. This enzyme participates in both the breakdown and synthesis of glucose. This is Phosphoglucomutase, cytoplasmic 2 from Zea mays (Maize).